The sequence spans 359 residues: Sulfate/thiosulfate import ATP-binding protein CysA (359 aa).

One can recognise an ABC transporter domain in the interval 3–237 (VRVAGVRKEF…PNSPFVYGFI (235 aa)). 35-42 (GPSGSGKT) is an ATP binding site.

It belongs to the ABC transporter superfamily. Sulfate/tungstate importer (TC 3.A.1.6) family. In terms of assembly, the complex is composed of two ATP-binding proteins (CysA), two transmembrane proteins (CysT and CysW) and a solute-binding protein (CysP).

The protein resides in the cell inner membrane. The enzyme catalyses sulfate(out) + ATP + H2O = sulfate(in) + ADP + phosphate + H(+). It catalyses the reaction thiosulfate(out) + ATP + H2O = thiosulfate(in) + ADP + phosphate + H(+). Part of the ABC transporter complex CysAWTP involved in sulfate/thiosulfate import. Responsible for energy coupling to the transport system. This Brucella melitensis biotype 1 (strain ATCC 23456 / CCUG 17765 / NCTC 10094 / 16M) protein is Sulfate/thiosulfate import ATP-binding protein CysA.